The chain runs to 355 residues: UDP-N-acetylglucosamine--N-acetylmuramyl-(pentapeptide) pyrophosphoryl-undecaprenol N-acetylglucosamine transferase (355 aa).

UDP-N-acetyl-alpha-D-glucosamine is bound by residues 12 to 14, Asn124, Arg160, Ser192, Ile243, 262 to 267, and Gln287; these read TGG and ALTVCE.

Belongs to the glycosyltransferase 28 family. MurG subfamily.

The protein localises to the cell inner membrane. It catalyses the reaction di-trans,octa-cis-undecaprenyl diphospho-N-acetyl-alpha-D-muramoyl-L-alanyl-D-glutamyl-meso-2,6-diaminopimeloyl-D-alanyl-D-alanine + UDP-N-acetyl-alpha-D-glucosamine = di-trans,octa-cis-undecaprenyl diphospho-[N-acetyl-alpha-D-glucosaminyl-(1-&gt;4)]-N-acetyl-alpha-D-muramoyl-L-alanyl-D-glutamyl-meso-2,6-diaminopimeloyl-D-alanyl-D-alanine + UDP + H(+). It participates in cell wall biogenesis; peptidoglycan biosynthesis. Functionally, cell wall formation. Catalyzes the transfer of a GlcNAc subunit on undecaprenyl-pyrophosphoryl-MurNAc-pentapeptide (lipid intermediate I) to form undecaprenyl-pyrophosphoryl-MurNAc-(pentapeptide)GlcNAc (lipid intermediate II). This chain is UDP-N-acetylglucosamine--N-acetylmuramyl-(pentapeptide) pyrophosphoryl-undecaprenol N-acetylglucosamine transferase, found in Haemophilus ducreyi (strain 35000HP / ATCC 700724).